The chain runs to 400 residues: tRNA(Ile)-lysidine synthase (400 aa).

20 to 25 contacts ATP; it reads SGGLDS.

It belongs to the tRNA(Ile)-lysidine synthase family.

Its subcellular location is the cytoplasm. It carries out the reaction cytidine(34) in tRNA(Ile2) + L-lysine + ATP = lysidine(34) in tRNA(Ile2) + AMP + diphosphate + H(+). Ligates lysine onto the cytidine present at position 34 of the AUA codon-specific tRNA(Ile) that contains the anticodon CAU, in an ATP-dependent manner. Cytidine is converted to lysidine, thus changing the amino acid specificity of the tRNA from methionine to isoleucine. The sequence is that of tRNA(Ile)-lysidine synthase from Wigglesworthia glossinidia brevipalpis.